Consider the following 388-residue polypeptide: Zinc finger protein ubi-d4 A (388 aa).

The tract at residues 60–190 (GPGSAPGQLY…AKGKGIGSAR (131 aa)) is disordered. Composition is skewed to basic and acidic residues over residues 97–107 (PDPEQMLKKEG) and 123–137 (DPIE…RDDD). The span at 156–170 (PDDFLDDLDDEDYEE) shows a compositional bias: acidic residues. The segment at 205 to 228 (YACDICGKRYKNRPGLSYHYAHSH) adopts a C2H2-type zinc-finger fold. The disordered stretch occupies residues 233–264 (EGAGAEDKEDSQPPTPIMHRPEEQKSKKGPDG). Positions 251–262 (HRPEEQKSKKGP) are enriched in basic and acidic residues. 2 PHD-type zinc fingers span residues 269 to 329 (NNYC…CKCC) and 326 to 376 (CKCC…CLDL).

Belongs to the requiem/DPF family.

Its subcellular location is the cytoplasm. The protein localises to the nucleus. Its function is as follows. May be a transcription factor required for the apoptosis response following survival factor withdrawal from myeloid cells. Might also have a role in the development and maturation of lymphoid cells. The sequence is that of Zinc finger protein ubi-d4 A (req-a) from Xenopus laevis (African clawed frog).